The chain runs to 211 residues: Molybdenum cofactor guanylyltransferase (211 aa).

Residues 12 to 14 (LAG), K25, N53, D71, and D101 each bind GTP. D101 contacts Mg(2+).

The protein belongs to the MobA family. As to quaternary structure, monomer. It depends on Mg(2+) as a cofactor.

The protein resides in the cytoplasm. The catalysed reaction is Mo-molybdopterin + GTP + H(+) = Mo-molybdopterin guanine dinucleotide + diphosphate. In terms of biological role, transfers a GMP moiety from GTP to Mo-molybdopterin (Mo-MPT) cofactor (Moco or molybdenum cofactor) to form Mo-molybdopterin guanine dinucleotide (Mo-MGD) cofactor. The protein is Molybdenum cofactor guanylyltransferase of Acidovorax sp. (strain JS42).